A 181-amino-acid polypeptide reads, in one-letter code: ATP synthase subunit delta (181 aa).

The protein belongs to the ATPase delta chain family. As to quaternary structure, F-type ATPases have 2 components, F(1) - the catalytic core - and F(0) - the membrane proton channel. F(1) has five subunits: alpha(3), beta(3), gamma(1), delta(1), epsilon(1). F(0) has three main subunits: a(1), b(2) and c(10-14). The alpha and beta chains form an alternating ring which encloses part of the gamma chain. F(1) is attached to F(0) by a central stalk formed by the gamma and epsilon chains, while a peripheral stalk is formed by the delta and b chains.

The protein localises to the cell membrane. Its function is as follows. F(1)F(0) ATP synthase produces ATP from ADP in the presence of a proton or sodium gradient. F-type ATPases consist of two structural domains, F(1) containing the extramembraneous catalytic core and F(0) containing the membrane proton channel, linked together by a central stalk and a peripheral stalk. During catalysis, ATP synthesis in the catalytic domain of F(1) is coupled via a rotary mechanism of the central stalk subunits to proton translocation. Functionally, this protein is part of the stalk that links CF(0) to CF(1). It either transmits conformational changes from CF(0) to CF(1) or is implicated in proton conduction. This Lactiplantibacillus plantarum (strain ATCC BAA-793 / NCIMB 8826 / WCFS1) (Lactobacillus plantarum) protein is ATP synthase subunit delta.